A 64-amino-acid polypeptide reads, in one-letter code: Large ribosomal subunit protein bL35 (64 aa).

Disordered regions lie at residues 1–20 (MPKAKTHSGASKRFRRTGTG) and 37–64 (PTKRTRRLAGRTQVSANDAPRINKMLNG).

It belongs to the bacterial ribosomal protein bL35 family.

In Mycobacterium sp. (strain JLS), this protein is Large ribosomal subunit protein bL35.